Reading from the N-terminus, the 408-residue chain is Serine/threonine transporter SstT (408 aa).

9 consecutive transmembrane segments (helical) span residues 11-31 (LANGSLVLQILVGIIAGVSLA), 43-63 (FLGSLFVGALKAIAPILVFIL), 82-102 (IVVLYLFGTFAAALTAVVLSM), 141-161 (ALMTGNYIGILAWGVGLGLAL), 192-212 (IGIFGLVAATFAETGFAAIAG), 216-236 (LLAVLLGAMAIIALIVNPLIV), 290-310 (IPLGATINMGGAAITITVLTL), 316-336 (LGIQVDLLTALLLSVVAAISA), and 363-383 (VAMQVVAVGFIIGVIQDAAET).

It belongs to the dicarboxylate/amino acid:cation symporter (DAACS) (TC 2.A.23) family.

It localises to the cell inner membrane. The enzyme catalyses L-serine(in) + Na(+)(in) = L-serine(out) + Na(+)(out). It carries out the reaction L-threonine(in) + Na(+)(in) = L-threonine(out) + Na(+)(out). In terms of biological role, involved in the import of serine and threonine into the cell, with the concomitant import of sodium (symport system). The protein is Serine/threonine transporter SstT of Shewanella sp. (strain ANA-3).